Here is a 1459-residue protein sequence, read N- to C-terminus: ARF guanine-nucleotide exchange factor 2 (1459 aa).

Serine 46 and serine 284 each carry phosphoserine. The region spanning 570 to 714 (FNEKPKKGIP…IIMLNTDLHN (145 aa)) is the SEC7 domain. The disordered stretch occupies residues 1412 to 1459 (EKGNGSSSHGSAHEQTPESNDVEIEATAPIDDNTDDDNKPKLSDVEKD). The segment covering 1447-1459 (DDNKPKLSDVEKD) has biased composition (basic and acidic residues).

As to quaternary structure, interacts (via SEC7 domain) with DRS2 (via C-terminus); the interaction is direct. Interacts with GMH1.

The protein resides in the cytoplasm. Its subcellular location is the cytosol. The protein localises to the membrane. It localises to the golgi apparatus membrane. Its function is as follows. Activates the ARF proteins by exchanging bound GDP for free GTP. Plays a role in maintaining mitochondrial morphology. Stimulates DRS2 flippase activity. In Saccharomyces cerevisiae (strain ATCC 204508 / S288c) (Baker's yeast), this protein is ARF guanine-nucleotide exchange factor 2 (GEA2).